Here is a 167-residue protein sequence, read N- to C-terminus: Peptide deformylase (167 aa).

Fe cation-binding residues include C91 and H133. E134 is a catalytic residue. H137 is a Fe cation binding site.

The protein belongs to the polypeptide deformylase family. The cofactor is Fe(2+).

The enzyme catalyses N-terminal N-formyl-L-methionyl-[peptide] + H2O = N-terminal L-methionyl-[peptide] + formate. Its function is as follows. Removes the formyl group from the N-terminal Met of newly synthesized proteins. Requires at least a dipeptide for an efficient rate of reaction. N-terminal L-methionine is a prerequisite for activity but the enzyme has broad specificity at other positions. This chain is Peptide deformylase, found in Baumannia cicadellinicola subsp. Homalodisca coagulata.